Reading from the N-terminus, the 150-residue chain is Large ribosomal subunit protein bL9 (150 aa).

This sequence belongs to the bacterial ribosomal protein bL9 family.

Its function is as follows. Binds to the 23S rRNA. The chain is Large ribosomal subunit protein bL9 from Streptococcus agalactiae serotype III (strain NEM316).